The following is a 781-amino-acid chain: MAVAEVSRTCLLTVRVLQAHRLPSKDLVTPSDCYVTLWLPTACSHRLQTRTVKNSSSPVWNQSFHFRIHRQLKNVMELKVFDQDLVTGDDPVLSVLFDAGTLRAGEFRRESFSLSPQGEGRLEVEFRLQSLADRGEWLVSNGVLVARELSCLHVQLEETGDQKSSEHRVQLVVPGSCEGPQEASVGTGTFRFHCPACWEQELSIRLQDAPEEQLKAPLSALPSGQVVRLVFPTSQEPLMRVELKKEAGLRELAVRLGFGPCAEEQAFLSRRKQVVAAALRQALQLDGDLQEDEIPVVAIMATGGGIRAMTSLYGQLAGLKELGLLDCVSYITGASGSTWALANLYEDPEWSQKDLAGPTELLKTQVTKNKLGVLAPSQLQRYRQELAERARLGYPSCFTNLWALINEALLHDEPHDHKLSDQREALSHGQNPLPIYCALNTKGQSLTTFEFGEWCEFSPYEVGFPKYGAFIPSELFGSEFFMGQLMKRLPESRICFLEGIWSNLYAANLQDSLYWASEPSQFWDRWVRNQANLDKEQVPLLKIEEPPSTAGRIAEFFTDLLTWRPLAQATHNFLRGLHFHKDYFQHPHFSTWKATTLDGLPNQLTPSEPHLCLLDVGYLINTSCLPLLQPTRDVDLILSLDYNLHGAFQQLQLLGRFCQEQGIPFPPISPSPEEQLQPRECHTFSDPTCPGAPAVLHFPLVSDSFREYSAPGVRRTPEEAAAGEVNLSSSDSPYHYTKVTYSQEDVDKLLHLTHYNVCNNQEQLLEALRQAVQRRRQRRPH.

A C2 domain is found at 1-112 (MAVAEVSRTC…RAGEFRRESF (112 aa)). Ca(2+) is bound by residues Asp26, Asp32, Asp82, Asp84, and Asp90. The PLA2c domain occupies 246–781 (EAGLRELAVR…VQRRRQRRPH (536 aa)). Ser335 functions as the Nucleophile in the catalytic mechanism. Asp615 serves as the catalytic Proton acceptor.

The cofactor is Ca(2+). In terms of tissue distribution, widely expressed. Expressed at higher level in brain, heart, liver, cerebellum and pancreas.

It is found in the cytoplasm. Its subcellular location is the cytosol. The protein localises to the mitochondrion membrane. The protein resides in the early endosome membrane. It carries out the reaction a 1,2-diacyl-sn-glycero-3-phosphocholine + H2O = a 1-acyl-sn-glycero-3-phosphocholine + a fatty acid + H(+). The catalysed reaction is a 1-acyl-sn-glycero-3-phosphocholine + H2O = sn-glycerol 3-phosphocholine + a fatty acid + H(+). It catalyses the reaction 1-hexadecanoyl-2-(9Z,12Z-octadecadienoyl)-sn-glycero-3-phosphoethanolamine + H2O = 1-hexadecanoyl-sn-glycero-3-phosphoethanolamine + (9Z,12Z)-octadecadienoate + H(+). The enzyme catalyses 1-hexadecanoyl-2-(5Z,8Z,11Z,14Z-eicosatetraenoyl)-sn-glycero-3-phosphoethanolamine + H2O = 1-hexadecanoyl-sn-glycero-3-phosphoethanolamine + (5Z,8Z,11Z,14Z)-eicosatetraenoate + H(+). It carries out the reaction 1-hexadecanoyl-sn-glycero-3-phosphocholine + H2O = sn-glycerol 3-phosphocholine + hexadecanoate + H(+). The catalysed reaction is 1-hexadecanoyl-2-(5Z,8Z,11Z,14Z-eicosatetraenoyl)-sn-glycero-3-phosphocholine + H2O = 1-hexadecanoyl-sn-glycero-3-phosphocholine + (5Z,8Z,11Z,14Z)-eicosatetraenoate + H(+). It catalyses the reaction 1-hexadecanoyl-2-(5Z,8Z,11Z,14Z-eicosatetraenoyl)-sn-glycero-3-phosphocholine + H2O = 2-(5Z,8Z,11Z,14Z)-eicosatetraenoyl-sn-glycero-3-phosphocholine + hexadecanoate + H(+). With respect to regulation, stimulated by cytosolic Ca(2+). Calcium-dependent phospholipase A1 and A2 and lysophospholipase that may play a role in membrane phospholipid remodeling. Functionally, calcium-dependent phospholipase A2 and lysophospholipase. Cleaves the ester bond of the fatty acyl group attached to the sn-2 position of phosphatidylethanolamines, producing lysophospholipids that may be used in deacylation-reacylation cycles. Hydrolyzes lysophosphatidylcholines with low efficiency but is inefficient toward phosphatidylcholines. Its function is as follows. Calcium-dependent phospholipase A1 and A2 and lysophospholipase. Cleaves the ester bond of the fatty acyl group attached to the sn-1 or sn-2 position of diacyl phospholipids (phospholipase A1 and A2 activity, respectively), producing lysophospholipids that may be used in deacylation-reacylation cycles. Can further hydrolyze lysophospholipids enabling complete deacylation. Has no activity toward alkylacyl phospholipids. This chain is Cytosolic phospholipase A2 beta (PLA2G4B), found in Homo sapiens (Human).